We begin with the raw amino-acid sequence, 140 residues long: Low calcium response locus protein T (140 aa).

This Yersinia pseudotuberculosis serotype I (strain IP32953) protein is Low calcium response locus protein T (lcrT).